Reading from the N-terminus, the 353-residue chain is Protein Wnt-11b-1 (353 aa).

The first 22 residues, 1 to 22, serve as a signal peptide directing secretion; the sequence is MAQIHHCVTLLLILCCSGLCGA. N-linked (GlcNAc...) asparagine glycosylation is found at asparagine 31, asparagine 38, and asparagine 88. 5 cysteine pairs are disulfide-bonded: cysteine 78–cysteine 89, cysteine 128–cysteine 136, cysteine 138–cysteine 155, cysteine 208–cysteine 222, and cysteine 210–cysteine 217. Serine 214 carries the O-palmitoleoyl serine; by PORCN lipid modification. A sulfotyrosine mark is found at tyrosine 274 and tyrosine 281. 6 disulfides stabilise this stretch: cysteine 282/cysteine 313, cysteine 298/cysteine 308, cysteine 312/cysteine 352, cysteine 328/cysteine 343, cysteine 330/cysteine 340, and cysteine 335/cysteine 336. The N-linked (GlcNAc...) asparagine glycan is linked to asparagine 299.

The protein belongs to the Wnt family. As to quaternary structure, homodimer. Secreted homodimers form a complex with wnt5a homodimers; tyrosine sulfation of both wnt11 and wnt5a by tpst1 is required for this interaction. Interacts with the transmembrane receptor fzd7/fz7. Interacts with lrp6 and ryk. Interacts with tdgf1/frl1. Interacts weakly with frzb1 and strongly with frzb2/crescent. Interaction with frzb2/crescent antagonizes wnt11 function in the neuroectoderm, but enhances it in mesodermal tissue. Post-translationally, glycosylation is required for protein secretion. In terms of processing, palmitoleoylation is required for efficient binding to frizzled receptors. Depalmitoleoylation leads to Wnt signaling pathway inhibition.

The protein localises to the secreted. The protein resides in the extracellular space. It localises to the extracellular matrix. In terms of biological role, ligand for the frizzled7 transmembrane receptor. Primarily acts via non-canonical Wnt pathways mediated by either Ca(2+) and PKC, or by JNK and dvl2/dsh. Depending on the cellular context, can also signal via the canonical Wnt pathway mediated by beta-catenin and dvl2/dsh. May also inhibit canonical Wnt signaling. Maternally initiates dorsal/ventral axis formation by a canonical route, which signals via lrp6. In a complex with wnt5a, activates the canonical and non-canonical processes involved in axis formation. In the non-canonical pathway, acts through fzd7/fz7 to induce phosphorylation of dvl2/dsh. Signals through a non-canonical Wnt pathway to regulate convergent extension movements during gastrulation. Interactions with the secreted Wnt antagonist sfrp5 to coordinate foregut development, acting via a non-canonical wnt pathway whereby sfrp5 restricts wnt11b activity to prevent inappropriate foregut formation. Mediates cardiogenesis via non-canonical Wnt signaling involving JNK-activation and PKC. Acts redundantly with wnt11/wnt11r during pronephros induction. The chain is Protein Wnt-11b-1 from Xenopus tropicalis (Western clawed frog).